Consider the following 419-residue polypeptide: Histidine--tRNA ligase (419 aa).

This sequence belongs to the class-II aminoacyl-tRNA synthetase family. As to quaternary structure, homodimer.

Its subcellular location is the cytoplasm. It catalyses the reaction tRNA(His) + L-histidine + ATP = L-histidyl-tRNA(His) + AMP + diphosphate + H(+). The sequence is that of Histidine--tRNA ligase from Mycoplasmoides gallisepticum (strain R(low / passage 15 / clone 2)) (Mycoplasma gallisepticum).